Reading from the N-terminus, the 363-residue chain is DNA primase small subunit PriS (363 aa).

Catalysis depends on residues Asp-105, Asp-107, and Asp-265.

The protein belongs to the eukaryotic-type primase small subunit family. In terms of assembly, heterodimer of a small subunit (PriS) and a large subunit (PriL). Mg(2+) serves as cofactor. It depends on Mn(2+) as a cofactor.

Catalytic subunit of DNA primase, an RNA polymerase that catalyzes the synthesis of short RNA molecules used as primers for DNA polymerase during DNA replication. The small subunit contains the primase catalytic core and has DNA synthesis activity on its own. Binding to the large subunit stabilizes and modulates the activity, increasing the rate of DNA synthesis while decreasing the length of the DNA fragments, and conferring RNA synthesis capability. The DNA polymerase activity may enable DNA primase to also catalyze primer extension after primer synthesis. May also play a role in DNA repair. This chain is DNA primase small subunit PriS, found in Methanococcus maripaludis (strain C7 / ATCC BAA-1331).